Here is a 314-residue protein sequence, read N- to C-terminus: Ribosomal RNA small subunit methyltransferase H (314 aa).

S-adenosyl-L-methionine contacts are provided by residues 34-36 (GGH), D54, F83, D104, and Q111.

This sequence belongs to the methyltransferase superfamily. RsmH family.

It is found in the cytoplasm. The enzyme catalyses cytidine(1402) in 16S rRNA + S-adenosyl-L-methionine = N(4)-methylcytidine(1402) in 16S rRNA + S-adenosyl-L-homocysteine + H(+). Specifically methylates the N4 position of cytidine in position 1402 (C1402) of 16S rRNA. The chain is Ribosomal RNA small subunit methyltransferase H from Ligilactobacillus salivarius (strain UCC118) (Lactobacillus salivarius).